An 87-amino-acid chain; its full sequence is UPF0250 protein NT01EI_2946 (87 aa).

This sequence belongs to the UPF0250 family.

This Edwardsiella ictaluri (strain 93-146) protein is UPF0250 protein NT01EI_2946.